A 333-amino-acid polypeptide reads, in one-letter code: BRISC and BRCA1-A complex member 1 (333 aa).

An N-acetylmethionine modification is found at M1. Residues 1 to 85 (MEVAEANSPT…PWQVPASASE (85 aa)) form a disordered region. S8 is modified (phosphoserine). A compositionally biased stretch (acidic residues) spans 10 to 24 (TEEEEEEEEEGEETI). Residues S33 and S53 each carry the phosphoserine modification. Residues 58–67 (EAATADGGAA) show a composition bias toward low complexity. Residues 99–302 (VIICLDLSEE…LELHNCMAKL (204 aa)) form a VWFA-like region.

It belongs to the BABAM1 family. In terms of assembly, component of the ARISC complex, at least composed of UIMC1/RAP80, ABRAXAS1, BRCC3/BRCC36, BABAM2 and BABAM1/NBA1. Component of the BRCA1-A complex, at least composed of BRCA1, BARD1, UIMC1/RAP80, ABRAXAS1, BRCC3/BRCC36, BABAM2 and BABAM1/NBA1. In the BRCA1-A complex, interacts directly with ABRAXAS1 and BABAM2. Component of the BRISC complex, at least composed of ABRAXAS2, BRCC3/BRCC36, BABAM2 and BABAM1/NBA1. Identified in a complex with SHMT2 and the other subunits of the BRISC complex.

It is found in the cytoplasm. The protein localises to the nucleus. In terms of biological role, component of the BRCA1-A complex, a complex that specifically recognizes 'Lys-63'-linked ubiquitinated histones H2A and H2AX at DNA lesions sites, leading to target the BRCA1-BARD1 heterodimer to sites of DNA damage at double-strand breaks (DSBs). The BRCA1-A complex also possesses deubiquitinase activity that specifically removes 'Lys-63'-linked ubiquitin on histones H2A and H2AX. In the BRCA1-A complex, it is required for the complex integrity and its localization at DSBs. Component of the BRISC complex, a multiprotein complex that specifically cleaves 'Lys-63'-linked ubiquitin in various substrates. In these 2 complexes, it is probably required to maintain the stability of BABAM2 and help the 'Lys-63'-linked deubiquitinase activity mediated by BRCC3/BRCC36 component. The BRISC complex is required for normal mitotic spindle assembly and microtubule attachment to kinetochores via its role in deubiquitinating NUMA1. Plays a role in interferon signaling via its role in the deubiquitination of the interferon receptor IFNAR1; deubiquitination increases IFNAR1 activity by enhancing its stability and cell surface expression. Down-regulates the response to bacterial lipopolysaccharide (LPS) via its role in IFNAR1 deubiquitination. In Mus musculus (Mouse), this protein is BRISC and BRCA1-A complex member 1 (Babam1).